We begin with the raw amino-acid sequence, 139 residues long: Large ribosomal subunit protein uL16c (139 aa).

It belongs to the universal ribosomal protein uL16 family. Part of the 50S ribosomal subunit.

The protein resides in the plastid. It is found in the chloroplast. The sequence is that of Large ribosomal subunit protein uL16c from Cicer arietinum (Chickpea).